The primary structure comprises 315 residues: Acetyl-coenzyme A carboxylase carboxyl transferase subunit alpha (315 aa).

The CoA carboxyltransferase C-terminal domain maps to 39-293 (RLQDKSSTLT…RGELASQLAM (255 aa)).

The protein belongs to the AccA family. Acetyl-CoA carboxylase is a heterohexamer composed of biotin carboxyl carrier protein (AccB), biotin carboxylase (AccC) and two subunits each of ACCase subunit alpha (AccA) and ACCase subunit beta (AccD).

It localises to the cytoplasm. The enzyme catalyses N(6)-carboxybiotinyl-L-lysyl-[protein] + acetyl-CoA = N(6)-biotinyl-L-lysyl-[protein] + malonyl-CoA. Its pathway is lipid metabolism; malonyl-CoA biosynthesis; malonyl-CoA from acetyl-CoA: step 1/1. Its function is as follows. Component of the acetyl coenzyme A carboxylase (ACC) complex. First, biotin carboxylase catalyzes the carboxylation of biotin on its carrier protein (BCCP) and then the CO(2) group is transferred by the carboxyltransferase to acetyl-CoA to form malonyl-CoA. The chain is Acetyl-coenzyme A carboxylase carboxyl transferase subunit alpha from Pseudomonas fluorescens (strain SBW25).